Here is a 190-residue protein sequence, read N- to C-terminus: Potassium-transporting ATPase KdpC subunit (190 aa).

A helical membrane pass occupies residues 7–27; it reads PALLMLLVWTLITGVFYPVLV.

This sequence belongs to the KdpC family. As to quaternary structure, the system is composed of three essential subunits: KdpA, KdpB and KdpC.

It localises to the cell inner membrane. Its function is as follows. Part of the high-affinity ATP-driven potassium transport (or Kdp) system, which catalyzes the hydrolysis of ATP coupled with the electrogenic transport of potassium into the cytoplasm. This subunit acts as a catalytic chaperone that increases the ATP-binding affinity of the ATP-hydrolyzing subunit KdpB by the formation of a transient KdpB/KdpC/ATP ternary complex. The sequence is that of Potassium-transporting ATPase KdpC subunit from Methylococcus capsulatus (strain ATCC 33009 / NCIMB 11132 / Bath).